The primary structure comprises 408 residues: LL-diaminopimelate aminotransferase (408 aa).

Substrate is bound by residues tyrosine 15 and glycine 42. Pyridoxal 5'-phosphate is bound by residues tyrosine 72, serine 108–lysine 109, tyrosine 132, asparagine 187, tyrosine 218, and serine 246–serine 248. Substrate contacts are provided by lysine 109, tyrosine 132, and asparagine 187. The residue at position 249 (lysine 249) is an N6-(pyridoxal phosphate)lysine. Pyridoxal 5'-phosphate contacts are provided by arginine 257 and asparagine 292. Asparagine 292 and arginine 388 together coordinate substrate.

The protein belongs to the class-I pyridoxal-phosphate-dependent aminotransferase family. LL-diaminopimelate aminotransferase subfamily. Homodimer. Pyridoxal 5'-phosphate is required as a cofactor.

It carries out the reaction (2S,6S)-2,6-diaminopimelate + 2-oxoglutarate = (S)-2,3,4,5-tetrahydrodipicolinate + L-glutamate + H2O + H(+). It participates in amino-acid biosynthesis; L-lysine biosynthesis via DAP pathway; LL-2,6-diaminopimelate from (S)-tetrahydrodipicolinate (aminotransferase route): step 1/1. Involved in the synthesis of meso-diaminopimelate (m-DAP or DL-DAP), required for both lysine and peptidoglycan biosynthesis. Catalyzes the direct conversion of tetrahydrodipicolinate to LL-diaminopimelate. In Prochlorococcus marinus subsp. pastoris (strain CCMP1986 / NIES-2087 / MED4), this protein is LL-diaminopimelate aminotransferase.